The following is a 95-amino-acid chain: Small ribosomal subunit protein bS18 (95 aa).

Belongs to the bacterial ribosomal protein bS18 family. Part of the 30S ribosomal subunit. Forms a tight heterodimer with protein bS6.

Functionally, binds as a heterodimer with protein bS6 to the central domain of the 16S rRNA, where it helps stabilize the platform of the 30S subunit. The sequence is that of Small ribosomal subunit protein bS18 from Rickettsia africae (strain ESF-5).